Here is a 375-residue protein sequence, read N- to C-terminus: Queuine tRNA-ribosyltransferase (375 aa).

Asp90 functions as the Proton acceptor in the catalytic mechanism. Substrate contacts are provided by residues 90-94 (DSGGF), Asp144, Gln193, and Gly220. Residues 251–257 (GVGTPED) form an RNA binding region. The active-site Nucleophile is Asp270. The RNA binding; important for wobble base 34 recognition stretch occupies residues 275-279 (TRNAR). 4 residues coordinate Zn(2+): Cys308, Cys310, Cys313, and His339.

It belongs to the queuine tRNA-ribosyltransferase family. In terms of assembly, homodimer. Within each dimer, one monomer is responsible for RNA recognition and catalysis, while the other monomer binds to the replacement base PreQ1. The cofactor is Zn(2+).

The catalysed reaction is 7-aminomethyl-7-carbaguanine + guanosine(34) in tRNA = 7-aminomethyl-7-carbaguanosine(34) in tRNA + guanine. Its pathway is tRNA modification; tRNA-queuosine biosynthesis. In terms of biological role, catalyzes the base-exchange of a guanine (G) residue with the queuine precursor 7-aminomethyl-7-deazaguanine (PreQ1) at position 34 (anticodon wobble position) in tRNAs with GU(N) anticodons (tRNA-Asp, -Asn, -His and -Tyr). Catalysis occurs through a double-displacement mechanism. The nucleophile active site attacks the C1' of nucleotide 34 to detach the guanine base from the RNA, forming a covalent enzyme-RNA intermediate. The proton acceptor active site deprotonates the incoming PreQ1, allowing a nucleophilic attack on the C1' of the ribose to form the product. After dissociation, two additional enzymatic reactions on the tRNA convert PreQ1 to queuine (Q), resulting in the hypermodified nucleoside queuosine (7-(((4,5-cis-dihydroxy-2-cyclopenten-1-yl)amino)methyl)-7-deazaguanosine). This Janthinobacterium sp. (strain Marseille) (Minibacterium massiliensis) protein is Queuine tRNA-ribosyltransferase.